A 387-amino-acid chain; its full sequence is Probable serine/threonine-protein kinase PBL18 (387 aa).

Residues Met1–Leu37 are disordered. Residue Gly2 is the site of N-myristoyl glycine attachment. A lipid anchor (S-palmitoyl cysteine) is attached at Cys4. Polar residues predominate over residues Arg14 to Leu37. A Phosphothreonine modification is found at Thr73. A Protein kinase domain is found at Phe84–Leu365. ATP contacts are provided by residues Ile90–Val98 and Lys122. A Phosphotyrosine modification is found at Tyr167. The Proton acceptor role is filled by Asp215. Ser219 is modified (phosphoserine). Phosphothreonine is present on residues Thr250 and Thr255. Tyr263 is subject to Phosphotyrosine. A disordered region spans residues Ser368–Ser387.

This sequence belongs to the protein kinase superfamily. Ser/Thr protein kinase family.

It is found in the cell membrane. The enzyme catalyses L-seryl-[protein] + ATP = O-phospho-L-seryl-[protein] + ADP + H(+). It catalyses the reaction L-threonyl-[protein] + ATP = O-phospho-L-threonyl-[protein] + ADP + H(+). In terms of biological role, may be involved in plant defense signaling. This is Probable serine/threonine-protein kinase PBL18 from Arabidopsis thaliana (Mouse-ear cress).